Reading from the N-terminus, the 196-residue chain is Large ribosomal subunit protein bL25 (196 aa).

The protein belongs to the bacterial ribosomal protein bL25 family. CTC subfamily. As to quaternary structure, part of the 50S ribosomal subunit; part of the 5S rRNA/L5/L18/L25 subcomplex. Contacts the 5S rRNA. Binds to the 5S rRNA independently of L5 and L18.

Its function is as follows. This is one of the proteins that binds to the 5S RNA in the ribosome where it forms part of the central protuberance. The protein is Large ribosomal subunit protein bL25 of Bacteroides fragilis (strain ATCC 25285 / DSM 2151 / CCUG 4856 / JCM 11019 / LMG 10263 / NCTC 9343 / Onslow / VPI 2553 / EN-2).